The following is a 432-amino-acid chain: Glutamate-1-semialdehyde 2,1-aminomutase 1 (432 aa).

At Lys268 the chain carries N6-(pyridoxal phosphate)lysine.

The protein belongs to the class-III pyridoxal-phosphate-dependent aminotransferase family. HemL subfamily. As to quaternary structure, homodimer. The cofactor is pyridoxal 5'-phosphate.

The protein localises to the cytoplasm. It catalyses the reaction (S)-4-amino-5-oxopentanoate = 5-aminolevulinate. Its pathway is porphyrin-containing compound metabolism; protoporphyrin-IX biosynthesis; 5-aminolevulinate from L-glutamyl-tRNA(Glu): step 2/2. This chain is Glutamate-1-semialdehyde 2,1-aminomutase 1, found in Bacillus cereus (strain ZK / E33L).